Here is a 630-residue protein sequence, read N- to C-terminus: Heat shock cognate 70 kDa protein 3 (630 aa).

A disordered region spans residues 611–630 (FYQGNNNPKPTTTTFNQDLD). Residues 615–630 (NNNPKPTTTTFNQDLD) are compositionally biased toward low complexity.

The protein belongs to the heat shock protein 70 family.

Functionally, may function in protein folding and assembly, and disassembly of protein complexes. The protein is Heat shock cognate 70 kDa protein 3 of Dictyostelium discoideum (Social amoeba).